The following is a 390-amino-acid chain: Lipid-A-disaccharide synthase (390 aa).

The protein belongs to the LpxB family.

The enzyme catalyses a lipid X + a UDP-2-N,3-O-bis[(3R)-3-hydroxyacyl]-alpha-D-glucosamine = a lipid A disaccharide + UDP + H(+). It functions in the pathway bacterial outer membrane biogenesis; LPS lipid A biosynthesis. Functionally, condensation of UDP-2,3-diacylglucosamine and 2,3-diacylglucosamine-1-phosphate to form lipid A disaccharide, a precursor of lipid A, a phosphorylated glycolipid that anchors the lipopolysaccharide to the outer membrane of the cell. This chain is Lipid-A-disaccharide synthase, found in Paramagnetospirillum magneticum (strain ATCC 700264 / AMB-1) (Magnetospirillum magneticum).